Reading from the N-terminus, the 158-residue chain is S-ribosylhomocysteine lyase (158 aa).

Fe cation is bound by residues H56, H60, and C125.

It belongs to the LuxS family. As to quaternary structure, homodimer. The cofactor is Fe cation.

The catalysed reaction is S-(5-deoxy-D-ribos-5-yl)-L-homocysteine = (S)-4,5-dihydroxypentane-2,3-dione + L-homocysteine. Functionally, involved in the synthesis of autoinducer 2 (AI-2) which is secreted by bacteria and is used to communicate both the cell density and the metabolic potential of the environment. The regulation of gene expression in response to changes in cell density is called quorum sensing. Catalyzes the transformation of S-ribosylhomocysteine (RHC) to homocysteine (HC) and 4,5-dihydroxy-2,3-pentadione (DPD). This chain is S-ribosylhomocysteine lyase, found in Leuconostoc mesenteroides subsp. mesenteroides (strain ATCC 8293 / DSM 20343 / BCRC 11652 / CCM 1803 / JCM 6124 / NCDO 523 / NBRC 100496 / NCIMB 8023 / NCTC 12954 / NRRL B-1118 / 37Y).